The sequence spans 176 residues: dCTP deaminase (176 aa).

DCTP contacts are provided by residues 99 to 104 and Asp-115; that span reads RSTLAR. Glu-125 (proton donor/acceptor) is an active-site residue. Gln-163 lines the dCTP pocket.

It belongs to the dCTP deaminase family. In terms of assembly, homotrimer.

The enzyme catalyses dCTP + H2O + H(+) = dUTP + NH4(+). It participates in pyrimidine metabolism; dUMP biosynthesis; dUMP from dCTP (dUTP route): step 1/2. Its function is as follows. Catalyzes the deamination of dCTP to dUTP. This is dCTP deaminase from Pyrobaculum aerophilum (strain ATCC 51768 / DSM 7523 / JCM 9630 / CIP 104966 / NBRC 100827 / IM2).